A 370-amino-acid chain; its full sequence is Glutamate 5-kinase (370 aa).

K13 provides a ligand contact to ATP. Residues S54, D140, and N152 each coordinate substrate. Residues 172–173 and 214–220 each bind ATP; these read SD and SGGMVTK. The region spanning 278-355 is the PUA domain; that stretch reads TGTLVLDAGA…GEIEAILGFR (78 aa).

Belongs to the glutamate 5-kinase family.

It localises to the cytoplasm. The catalysed reaction is L-glutamate + ATP = L-glutamyl 5-phosphate + ADP. It functions in the pathway amino-acid biosynthesis; L-proline biosynthesis; L-glutamate 5-semialdehyde from L-glutamate: step 1/2. Its function is as follows. Catalyzes the transfer of a phosphate group to glutamate to form L-glutamate 5-phosphate. The polypeptide is Glutamate 5-kinase (Paramagnetospirillum magneticum (strain ATCC 700264 / AMB-1) (Magnetospirillum magneticum)).